The primary structure comprises 437 residues: tRNA-2-methylthio-N(6)-dimethylallyladenosine synthase (437 aa).

One can recognise an MTTase N-terminal domain in the interval 1–117; it reads MKFYIKTFGC…LPNLLEEAKS (117 aa). Cys10, Cys46, Cys80, Cys156, Cys160, and Cys163 together coordinate [4Fe-4S] cluster. The 230-residue stretch at 142–371 folds into the Radical SAM core domain; it reads RENKYTAFVT…INLQKDITFK (230 aa). In terms of domain architecture, TRAM spans 374 to 435; sequence LEYQDKIVEI…RFSLEGSIIG (62 aa).

The protein belongs to the methylthiotransferase family. MiaB subfamily. Monomer. [4Fe-4S] cluster is required as a cofactor.

It is found in the cytoplasm. It catalyses the reaction N(6)-dimethylallyladenosine(37) in tRNA + (sulfur carrier)-SH + AH2 + 2 S-adenosyl-L-methionine = 2-methylsulfanyl-N(6)-dimethylallyladenosine(37) in tRNA + (sulfur carrier)-H + 5'-deoxyadenosine + L-methionine + A + S-adenosyl-L-homocysteine + 2 H(+). Its function is as follows. Catalyzes the methylthiolation of N6-(dimethylallyl)adenosine (i(6)A), leading to the formation of 2-methylthio-N6-(dimethylallyl)adenosine (ms(2)i(6)A) at position 37 in tRNAs that read codons beginning with uridine. The chain is tRNA-2-methylthio-N(6)-dimethylallyladenosine synthase from Sulfurihydrogenibium sp. (strain YO3AOP1).